The following is a 129-amino-acid chain: Protein FYV12 (129 aa).

Asn91 is a glycosylation site (N-linked (GlcNAc...) asparagine). Residues 109–128 form a helical membrane-spanning segment; it reads LMTTFLLYVLYVCIYISAFI.

The protein localises to the membrane. Involved in K1 killer toxin resistance. The protein is Protein FYV12 (FYV12) of Saccharomyces cerevisiae (strain ATCC 204508 / S288c) (Baker's yeast).